Here is a 223-residue protein sequence, read N- to C-terminus: Ribosome maturation factor RimM (223 aa).

Residues 1–12 (MARRPGSSSRGP) are compositionally biased toward low complexity. Disordered stretches follow at residues 1 to 44 (MARR…DPGL) and 204 to 223 (ADPP…DDPG). The region spanning 136–210 (EDEFFLTDLI…KVVADPPDDL (75 aa)) is the PRC barrel domain.

It belongs to the RimM family. In terms of assembly, binds ribosomal protein uS19.

It localises to the cytoplasm. In terms of biological role, an accessory protein needed during the final step in the assembly of 30S ribosomal subunit, possibly for assembly of the head region. Essential for efficient processing of 16S rRNA. May be needed both before and after RbfA during the maturation of 16S rRNA. It has affinity for free ribosomal 30S subunits but not for 70S ribosomes. The polypeptide is Ribosome maturation factor RimM (Methylorubrum extorquens (strain PA1) (Methylobacterium extorquens)).